Consider the following 197-residue polypeptide: Probable GTP-binding protein EngB (197 aa).

The EngB-type G domain maps to 26 to 197; the sequence is ELPEIALAGR…EAWDAILEKL (172 aa). Residues 34–41, 61–65, 79–82, 146–149, and 178–180 contribute to the GTP site; these read GRSNVGKS, GKTQL, DVPG, TKAD, and FSS. 2 residues coordinate Mg(2+): S41 and T63.

It belongs to the TRAFAC class TrmE-Era-EngA-EngB-Septin-like GTPase superfamily. EngB GTPase family. Mg(2+) is required as a cofactor.

In terms of biological role, necessary for normal cell division and for the maintenance of normal septation. In Streptococcus pneumoniae (strain CGSP14), this protein is Probable GTP-binding protein EngB.